The primary structure comprises 417 residues: Origin of replication complex subunit 4 (417 aa).

Glycine 59–alanine 66 provides a ligand contact to ATP.

Belongs to the ORC4 family. Component of the origin recognition complex (ORC) composed of at least ORC1 (ORC1A or ORC1B), ORC2, ORC3, ORC4, ORC5 and ORC6. ORC is regulated in a cell-cycle and development dependent manner. It is sequentially assembled at the exit from anaphase of mitosis and disassembled as cells enter S phase. Interacts directly with ORC1A, ORC2, ORC3, ORC5 and ORC6. In terms of tissue distribution, follow a cell-cycle regulation with a peak at the G1/S-phase. Isoform AtORC4a is expressed at low levels ubiquitously. Isoform AtORC4b is mostly expressed in siliques, flowers and flower buds, and, to a lower exent, in roots, leaves and stems.

Its subcellular location is the nucleus. In terms of biological role, component of the origin recognition complex (ORC) that binds origins of replication. DNA-binding is ATP-dependent. The specific DNA sequences that define origins of replication have not been identified yet. ORC is required to assemble the pre-replication complex necessary to initiate DNA replication. The protein is Origin of replication complex subunit 4 of Arabidopsis thaliana (Mouse-ear cress).